Here is a 104-residue protein sequence, read N- to C-terminus: DNA-binding transcriptional repressor TubR (104 aa).

DNA-binding regions (HTH) lie at residues 43-50 (KTAVAEMI) and 54-65 (KPTVFATVNSFY).

As to quaternary structure, homodimer. Binds to tubC DNA, the TubR-DNA complex binds to TubZ.

Its function is as follows. A DNA-binding protein that is part of the type III plasmid partition system used to ensure correct segregation of the pBtoxis plasmid. Cooperatively binds to the centromere-like site (tubC), which may seed filament formation by the TubZ polymerizing GTPase, stabilizing TubZ filaments. TubR-tubC complexes track the depolymerizing minus end of the filament, probably pulling plasmid within the cell. Required for plasmid replication. Negatively regulates levels of TubZ; its effect on RNA expression has not been shown. Specifically binds iterons, 12-bp imperfect direct repeats that function as a plasmid origin of replication. Four TubR dimers bind to tubC, forming an extended bent DNA-protein filament with protein wrapping helically around the outside of the DNA. In Bacillus thuringiensis subsp. israelensis, this protein is DNA-binding transcriptional repressor TubR.